A 179-amino-acid polypeptide reads, in one-letter code: UPF0227 protein VS_2073 (179 aa).

This sequence belongs to the UPF0227 family.

The polypeptide is UPF0227 protein VS_2073 (Vibrio atlanticus (strain LGP32) (Vibrio splendidus (strain Mel32))).